Reading from the N-terminus, the 475-residue chain is Ribulose bisphosphate carboxylase large chain (475 aa).

A propeptide spanning residues Met-1–Ser-2 is cleaved from the precursor. The residue at position 3 (Pro-3) is an N-acetylproline. Position 14 is an N6,N6,N6-trimethyllysine (Lys-14). Residues Asn-123 and Thr-173 each contribute to the substrate site. Residue Lys-175 is the Proton acceptor of the active site. Lys-177 contributes to the substrate binding site. Lys-201, Asp-203, and Glu-204 together coordinate Mg(2+). Lys-201 bears the N6-carboxylysine mark. His-294 serves as the catalytic Proton acceptor. Substrate-binding residues include Arg-295, His-327, and Ser-379.

Belongs to the RuBisCO large chain family. Type I subfamily. In terms of assembly, heterohexadecamer of 8 large chains and 8 small chains; disulfide-linked. The disulfide link is formed within the large subunit homodimers. It depends on Mg(2+) as a cofactor. The disulfide bond which can form in the large chain dimeric partners within the hexadecamer appears to be associated with oxidative stress and protein turnover.

The protein localises to the plastid. The protein resides in the chloroplast. It catalyses the reaction 2 (2R)-3-phosphoglycerate + 2 H(+) = D-ribulose 1,5-bisphosphate + CO2 + H2O. The enzyme catalyses D-ribulose 1,5-bisphosphate + O2 = 2-phosphoglycolate + (2R)-3-phosphoglycerate + 2 H(+). Functionally, ruBisCO catalyzes two reactions: the carboxylation of D-ribulose 1,5-bisphosphate, the primary event in carbon dioxide fixation, as well as the oxidative fragmentation of the pentose substrate in the photorespiration process. Both reactions occur simultaneously and in competition at the same active site. The polypeptide is Ribulose bisphosphate carboxylase large chain (Mesostigma viride (Green alga)).